The following is a 652-amino-acid chain: Acetyl-coenzyme A synthetase (652 aa).

Residues 190 to 193 (RGGR) and T310 contribute to the CoA site. Residues 386–388 (GEP), 410–415 (DTWWQT), D499, and R514 contribute to the ATP site. S522 contacts CoA. Residue R525 participates in ATP binding. Residues V536, H538, and V541 each contribute to the Mg(2+) site. R583 contacts CoA. K608 is subject to N6-acetyllysine.

The protein belongs to the ATP-dependent AMP-binding enzyme family. Requires Mg(2+) as cofactor. Post-translationally, acetylated. Deacetylation by the SIR2-homolog deacetylase activates the enzyme.

The enzyme catalyses acetate + ATP + CoA = acetyl-CoA + AMP + diphosphate. Functionally, catalyzes the conversion of acetate into acetyl-CoA (AcCoA), an essential intermediate at the junction of anabolic and catabolic pathways. AcsA undergoes a two-step reaction. In the first half reaction, AcsA combines acetate with ATP to form acetyl-adenylate (AcAMP) intermediate. In the second half reaction, it can then transfer the acetyl group from AcAMP to the sulfhydryl group of CoA, forming the product AcCoA. In Methylorubrum extorquens (strain CM4 / NCIMB 13688) (Methylobacterium extorquens), this protein is Acetyl-coenzyme A synthetase.